A 647-amino-acid chain; its full sequence is MMQALTMRSWLATLVTALLAVAIWPDPGQSLPQGAPETVCDTMLPFHSGGSVLPQNSVSPFSVETSSSTLGQGQTLRVDLTGVPAGLSFGGYMIQARNRNPPHQIIGQFGPARDGTIKLMNCENSVNNSATHSNAGPKQQVILEWQSPVDFLGQVVFNATIAQSYNEFWVGVPSQPVQIVRRDLSAAPPLPTQSPSAPAGTTRAPYVPPSYVAPNNVVAVSSDPIYNGCGQSKNCFGFPDGCVATKSCTSITVVTVRGDVFEFEIQSGKGTNAAYVAVGLSDDAKMGDDLTTECVPENGRVNLYSSLTSASPYSAVRSNVNQNSARLLDASIVDGVIYCRVQRDAVTNVQGRTFDLRNGKYHLLVASGSSLKENSVGYHDIGRLPSAQPINLAEVQDLSGSSRLLIQLHGAFMIAAWIGTTSLGIIFARYFKQTWVGSQSCGTDQWFAWHRLLMVTTWSLTVAAYVLIWVELKQAVWHAHSIIGLITVILCFIQPIGALFRPGPNDKKRPYFNWGHWLGGNLAHILGIVTIFFSVKLPKAELPEWMDWILVSFVVVHVLVHLIFSIGGMASERHLSQRANTFQMGDMSHHQQHAMRNGMSMERKMDAPYAGMRKGLLGVYGVVLILFVTVLILLVVLAPIEQFLGKS.

Residues 10–30 (WLATLVTALLAVAIWPDPGQS) traverse the membrane as a helical segment. One can recognise a Reelin domain in the interval 25-195 (PDPGQSLPQG…AAPPLPTQSP (171 aa)). Residues N127 and N158 are each glycosylated (N-linked (GlcNAc...) asparagine). In terms of domain architecture, DOMON spans 245 to 368 (TKSCTSITVV…GKYHLLVASG (124 aa)). Residues 372-570 (KENSVGYHDI…HLIFSIGGMA (199 aa)) form the Cytochrome b561 domain. Residues 408 to 428 (LHGAFMIAAWIGTTSLGIIFA) traverse the membrane as a helical segment. Residues H409 and H450 each coordinate heme b. 5 consecutive transmembrane segments (helical) span residues 452 to 472 (LLMVTTWSLTVAAYVLIWVEL), 480 to 500 (HSIIGLITVILCFIQPIGALF), 515 to 535 (GHWLGGNLAHILGIVTIFFSV), 548 to 568 (WILVSFVVVHVLVHLIFSIGG), and 616 to 636 (LLGVYGVVLILFVTVLILLVV). H480 and H516 together coordinate heme b.

It belongs to the FRRS1 family. The cofactor is heme b.

The protein localises to the membrane. Its function is as follows. Putative ferric-chelate reductases reduce Fe(3+) to Fe(2+) before its transport from the endosome to the cytoplasm. The protein is Putative ferric-chelate reductase 1 homolog of Drosophila melanogaster (Fruit fly).